The chain runs to 514 residues: Cytochrome P450 monooxygenase FUS8 (514 aa).

Residues 24-44 (VFENLTVTNTVCAFIALFIIV) traverse the membrane as a helical segment. Residues Asn225 and Asn443 are each glycosylated (N-linked (GlcNAc...) asparagine). Cys460 is a heme binding site.

It belongs to the cytochrome P450 family. Heme is required as a cofactor.

It is found in the membrane. It functions in the pathway mycotoxin biosynthesis. Cytochrome P450 monooxygenase; part of the gene cluster that mediates the biosynthesis of the mycotoxin fusarin C. Within the cluster, FUS1, FUS2, FUS8 and FUS9 are sufficient for fusarin production. The roles of the other FUS members are yet undetermined. The fusarin C synthetase FUS1 is responsible for the condensation of one acetyl-coenzyme A (CoA) unit with six malonyl-CoA units and the amide linkage of the arising heptaketide and homoserine, subsequently releasing the first intermediate, prefusarin, as an alcohol with an open ring structure. The cytochrome P450 monooxygenase FUS8 participates in multiple oxidation processes at carbon C-20 and is able to use the FUS1 product as substrate, resulting in formation of 20-hydroxy-prefusarin. This reaction seems to be essential before the 2-pyrrolidone ring closure can be catalyzed by FUS2, generating 20-hydroxy-fusarin. FUS8 is able to further oxidizes carbon C-20 after ring closure, resulting in the formation of carboxy-fusarin C. As the last step, FUS9 methylates the hydroxyl group at C-21 to generate fusarin C. Fusarin C can then rearrange to epi-fusarin C, the (z)-isomers, and fusarin A and fusarin D. This is Cytochrome P450 monooxygenase FUS8 from Gibberella fujikuroi (strain CBS 195.34 / IMI 58289 / NRRL A-6831) (Bakanae and foot rot disease fungus).